Reading from the N-terminus, the 389-residue chain is MSEYLFTSESVSEGHPDKVADQVSDAILDAILAQDPKARVAAETLVNTGLCVLAGEITTTAQVDYIKVARETIKRIGYNSSELGFDANGCAVGVYYDQQSPDIAQGVNEGEGIDLNQGAGDQGLMFGYACDETPTLMPFAIYYSHRLMQRQSELRKDGRLPWLRPDAKAQLTVVYDSETGKVKRIDTVVLSTQHDPAISHEELSKAVIEQIIKPVLPPELLTDETKYLINPTGRFVIGGPQGDCGLTGRKIIVDTYGGAAPHGGGAFSGKDPSKVDRSAAYACRYVAKNIVAAGLATQCQIQVSYAIGVAEPTSISIDTFGTGKISEEKLIALVCEHFDLRPKGIVQMLDLLRPIYGKSAAYGHFGREEPEFTWERTDKAASLKAAAGL.

Residue His15 coordinates ATP. Asp17 is a binding site for Mg(2+). Glu43 contributes to the K(+) binding site. L-methionine-binding residues include Glu56 and Gln99. Residues 99–109 (QSPDIAQGVNE) form a flexible loop region. ATP is bound by residues 166-168 (DAK), 234-235 (RF), Asp243, 249-250 (RK), Ala266, and Lys270. Position 243 (Asp243) interacts with L-methionine. Residue Lys274 coordinates L-methionine.

Belongs to the AdoMet synthase family. In terms of assembly, homotetramer; dimer of dimers. Mg(2+) serves as cofactor. K(+) is required as a cofactor.

The protein resides in the cytoplasm. It carries out the reaction L-methionine + ATP + H2O = S-adenosyl-L-methionine + phosphate + diphosphate. The protein operates within amino-acid biosynthesis; S-adenosyl-L-methionine biosynthesis; S-adenosyl-L-methionine from L-methionine: step 1/1. Its function is as follows. Catalyzes the formation of S-adenosylmethionine (AdoMet) from methionine and ATP. The overall synthetic reaction is composed of two sequential steps, AdoMet formation and the subsequent tripolyphosphate hydrolysis which occurs prior to release of AdoMet from the enzyme. This is S-adenosylmethionine synthase from Neisseria gonorrhoeae (strain NCCP11945).